The chain runs to 475 residues: Splicing factor U2AF 65 kDa subunit (475 aa).

Positions 1–90 (MSDFDEFERQ…RHEKKKKVRK (90 aa)) are disordered. N-acetylserine is present on serine 2. Residue serine 2 is modified to Phosphoserine. Residues 2-93 (SDFDEFERQL…KKKKVRKYWD (92 aa)) are required for interaction with PRPF19. A compositionally biased stretch (basic and acidic residues) spans 7–22 (FERQLNENKQERDKEN). Lysine 15 carries the post-translational modification 5-hydroxylysine; by JMJD6; alternate. Lysine 15 participates in a covalent cross-link: Glycyl lysine isopeptide (Lys-Gly) (interchain with G-Cter in SUMO2); alternate. The tract at residues 17-47 (ERDKENRHRKRSHSRSRSRDRKRRSRSRDRR) is necessary and sufficient to stimulate pre-mRNAs 3'-end cleavage in a CFIm complex-dependent manner. Positions 23 to 46 (RHRKRSHSRSRSRDRKRRSRSRDR) are enriched in basic residues. Positions 47-56 (RNRDQRSASR) are enriched in basic and acidic residues. Lysine 70 participates in a covalent cross-link: Glycyl lysine isopeptide (Lys-Gly) (interchain with G-Cter in SUMO2); alternate. Lysine 70 bears the N6-acetyllysine; alternate mark. Residue serine 79 is modified to Phosphoserine. Residues 79 to 89 (SPRHEKKKKVR) are compositionally biased toward basic residues. 3 RRM domains span residues 149–231 (RRLY…RPHD), 259–337 (HKLF…RASV), and 385–466 (LPEE…YCDP). Lysine 276 bears the 5-hydroxylysine; by JMJD6 mark. Position 294 is a phosphoserine (serine 294).

The protein belongs to the splicing factor SR family. As to quaternary structure, interacts with U2AF1L4. Heterodimer with U2AF1. Binds unphosphorylated SF1. Interacts with SCAF11 and SNW1. Interacts with ZRSR2/U2AF1-RS2. Interacts with RBM17. Interacts with PRPF19; the interaction is direct. Interacts with POLR2A (via the C-terminal domain); Interacts with PRPF19; the interaction is direct. Interacts with POLR2A (via the C-terminal domain); recruits PRPF19 and the Prp19 complex to the pre-mRNA. Interacts with KHDC4 (Isoform 2). Interacts with ZRSR2. Interacts with the SF3B complex composed of SF3B1, SF3B2, SF3B3, SF3B4, SF3B5, SF3B6 and PHF5A. Interacts (via N-terminus) with CPSF7 (via C-terminus); this interaction stimulates pre-mRNA 3'-end processing by promoting the recruitment of the CFIm complex to cleavage and polyadenylation signals. Interacts with ARGLU1; interaction may be involved in ARGLU1-mediated modulation of alternative splicing. Post-translationally, lysyl-hydroxylation at Lys-15 and Lys-276 affects the mRNA splicing activity of the protein, leading to regulate some, but not all, alternative splicing events.

The protein resides in the nucleus. In terms of biological role, plays a role in pre-mRNA splicing and 3'-end processing. By recruiting PRPF19 and the PRP19C/Prp19 complex/NTC/Nineteen complex to the RNA polymerase II C-terminal domain (CTD), and thereby pre-mRNA, may couple transcription to splicing. Required for the export of mRNA out of the nucleus, even if the mRNA is encoded by an intron-less gene. Positively regulates pre-mRNA 3'-end processing by recruiting the CFIm complex to cleavage and polyadenylation signals. The polypeptide is Splicing factor U2AF 65 kDa subunit (U2af2) (Mus musculus (Mouse)).